Here is a 75-residue protein sequence, read N- to C-terminus: High-potential iron-sulfur protein (75 aa).

Residues C38, C41, C54, and C68 each coordinate [4Fe-4S] cluster.

Homodimer. Monomer at different ionic strengths.

In terms of biological role, specific class of high-redox-potential 4Fe-4S ferredoxins. Functions in anaerobic electron transport in most purple and in some other photosynthetic bacteria and in at least one genus (Paracoccus) of halophilic, denitrifying bacteria. Competent in photosynthetic electron transfer to oxidized cytochrome bc1 complex via the membrane-bound c-type tetraheme. This chain is High-potential iron-sulfur protein (hip), found in Rhodoferax fermentans.